The sequence spans 200 residues: Dephospho-CoA kinase (200 aa).

Residues 4 to 200 enclose the DPCK domain; the sequence is VLALTGGIAT…QLLIKIKEEG (197 aa). Residue 12 to 17 participates in ATP binding; that stretch reads ATGKST.

This sequence belongs to the CoaE family.

The protein resides in the cytoplasm. It catalyses the reaction 3'-dephospho-CoA + ATP = ADP + CoA + H(+). Its pathway is cofactor biosynthesis; coenzyme A biosynthesis; CoA from (R)-pantothenate: step 5/5. In terms of biological role, catalyzes the phosphorylation of the 3'-hydroxyl group of dephosphocoenzyme A to form coenzyme A. In Lactobacillus acidophilus (strain ATCC 700396 / NCK56 / N2 / NCFM), this protein is Dephospho-CoA kinase.